Reading from the N-terminus, the 565-residue chain is Periplasmic trehalase (565 aa).

Positions 1–30 are cleaved as a signal peptide; sequence MKSPAPSRPQKMALIPACIFLCFAALSVQA. Substrate-binding positions include arginine 152, 159–160, asparagine 196, 205–207, 277–279, and glycine 310; these read WD, RSQ, and RPE. Residues aspartate 312 and glutamate 496 each act as proton donor/acceptor in the active site. A substrate-binding site is contributed by glutamate 511. The segment at 538-565 is disordered; it reads PCDNVPATRPTVKSATTQPSTKEAQPTP. Over residues 548–565 the composition is skewed to polar residues; that stretch reads TVKSATTQPSTKEAQPTP.

It belongs to the glycosyl hydrolase 37 family. Monomer.

Its subcellular location is the periplasm. The catalysed reaction is alpha,alpha-trehalose + H2O = alpha-D-glucose + beta-D-glucose. Provides the cells with the ability to utilize trehalose at high osmolarity by splitting it into glucose molecules that can subsequently be taken up by the phosphotransferase-mediated uptake system. In Escherichia coli (strain K12 / MC4100 / BW2952), this protein is Periplasmic trehalase.